The chain runs to 384 residues: Lipid-A-disaccharide synthase 1 (384 aa).

This sequence belongs to the LpxB family.

It catalyses the reaction a lipid X + a UDP-2-N,3-O-bis[(3R)-3-hydroxyacyl]-alpha-D-glucosamine = a lipid A disaccharide + UDP + H(+). Its pathway is bacterial outer membrane biogenesis; LPS lipid A biosynthesis. Condensation of UDP-2,3-diacylglucosamine and 2,3-diacylglucosamine-1-phosphate to form lipid A disaccharide, a precursor of lipid A, a phosphorylated glycolipid that anchors the lipopolysaccharide to the outer membrane of the cell. This chain is Lipid-A-disaccharide synthase 1, found in Legionella pneumophila (strain Lens).